The chain runs to 439 residues: Trigger factor (439 aa).

Positions 175–260 constitute a PPIase FKBP-type domain; the sequence is GDRVTISYRS…VERLSVKDEI (86 aa).

This sequence belongs to the FKBP-type PPIase family. Tig subfamily.

It is found in the cytoplasm. It carries out the reaction [protein]-peptidylproline (omega=180) = [protein]-peptidylproline (omega=0). Its function is as follows. Involved in protein export. Acts as a chaperone by maintaining the newly synthesized protein in an open conformation. Functions as a peptidyl-prolyl cis-trans isomerase. The sequence is that of Trigger factor from Anaplasma phagocytophilum (strain HZ).